Reading from the N-terminus, the 108-residue chain is TYRO protein tyrosine kinase-binding protein (108 aa).

Residues 1-25 (MGRLGPSNGLLPLLLAVGGFSLVQA) form the signal peptide. The Extracellular segment spans residues 26 to 36 (QRECSCSAVSP). Residues 37-57 (GILAGIVLGDLVLTLLIALAV) form a helical membrane-spanning segment. Ca(2+) is bound at residue aspartate 46. Over 58–108 (YSLGRLVPRTRGAVDVTRKQHIAETESAYQELQGQRSDVYSDLNTQRQYYK) the chain is Cytoplasmic. An ITAM domain is found at 75 to 103 (RKQHIAETESAYQELQGQRSDVYSDLNTQ). A phosphotyrosine mark is found at tyrosine 86 and tyrosine 97.

The protein belongs to the TYROBP family. In terms of assembly, homodimer; disulfide-linked. Homotrimer; disulfide-linked. Homotetramer; disulfide-linked. Homotrimers and homotetramers form when low levels of partner receptors are available and is competitive with assembly with interacting receptors. They may represent alternative oligomerization states or may be intermediates in the receptor assembly process. Binding of a metal cation aids in homooligomerization through coordination of the metal ion by the subunits of the oligomer. Interacts with TREM1. Interacts with TREM2. Interacts with CLECSF5. Interacts with CD300LB and CD300C2. Interacts with CD300E. Interacts (via ITAM domain) with SYK (via SH2 domains); activates SYK mediating neutrophils and macrophages integrin-mediated activation. Interacts with KLRC2. Interacts with CD300H. Interacts with KLRD1. Interacts with SIGLEC1. Following ligand binding by associated receptors, tyrosine phosphorylated in the ITAM domain which leads to activation of additional tyrosine kinases and subsequent cell activation. In terms of tissue distribution, highly expressed in spleen, liver and thymus. Weakly expressed in lymph nodes. Expressed in peripheral blood leukocytes, granulocytes, macrophages, and monocytes. LPS does not increase expression in granulocytes.

It localises to the cell membrane. Its function is as follows. Adapter protein which non-covalently associates with activating receptors found on the surface of a variety of immune cells to mediate signaling and cell activation following ligand binding by the receptors. TYROBP is tyrosine-phosphorylated in the ITAM domain following ligand binding by the associated receptors which leads to activation of additional tyrosine kinases and subsequent cell activation. Also has an inhibitory role in some cells. Non-covalently associates with activating receptors of the CD300 family to mediate cell activation. Also mediates cell activation through association with activating receptors of the CD200R family. Required for neutrophil activation mediated by integrin. Required for the activation of myeloid cells mediated by the CLEC5A/MDL1 receptor. Associates with natural killer (NK) cell receptors such as the KLRD1/KLRC2 heterodimer to mediate NK cell activation. Associates with TREM1 to mediate activation of neutrophils and monocytes. Associates with TREM2 on monocyte-derived dendritic cells to mediate up-regulation of chemokine receptor CCR7 and dendritic cell maturation and survival. Association with TREM2 mediates cytokine-induced formation of multinucleated giant cells which are formed by the fusion of macrophages. Stabilizes the TREM2 C-terminal fragment (TREM2-CTF) produced by TREM2 ectodomain shedding which suppresses the release of pro-inflammatory cytokines. In microglia, required with TREM2 for phagocytosis of apoptotic neurons. Required with ITGAM/CD11B in microglia to control production of microglial superoxide ions which promote the neuronal apoptosis that occurs during brain development. Promotes pro-inflammatory responses in microglia following nerve injury which accelerates degeneration of injured neurons. Positively regulates the expression of the IRAK3/IRAK-M kinase and IL10 production by liver dendritic cells and inhibits their T cell allosimulatory ability. Negatively regulates B cell proliferation. Required for CSF1-mediated osteoclast cytoskeletal organization. Positively regulates multinucleation during osteoclast development. The sequence is that of TYRO protein tyrosine kinase-binding protein from Sus scrofa (Pig).